We begin with the raw amino-acid sequence, 229 residues long: Probable transmembrane reductase CYB561D1 (229 aa).

Residues 1 to 24 (MQPLEVGLVPAPAGEPRLTRWLRR) lie on the Cytoplasmic side of the membrane. The region spanning 22-224 (LRRGSGILAH…HQISRSYLPR (203 aa)) is the Cytochrome b561 domain. Residues 25 to 45 (GSGILAHLVALGFTIFLTALS) form a helical membrane-spanning segment. The Lumenal portion of the chain corresponds to 46-53 (RPGTSLFS). Residues 54–74 (WHPVFMALAFCLCMAEAILLF) form a helical membrane-spanning segment. His55 serves as a coordination point for heme b. Residues 75 to 91 (SPEHSLFFFCSRKARIR) are Cytoplasmic-facing. The chain crosses the membrane as a helical span at residues 92-112 (LHWAGQTLAILCAALGLGFII). Heme b contacts are provided by His93 and His127. The Lumenal portion of the chain corresponds to 113-128 (SSRTRSELPHLVSWHS). A helical transmembrane segment spans residues 129 to 149 (WVGALTLLATAVQALCGLCLL). Residues 150 to 169 (CPRAARVSRVARLKLYHLTC) lie on the Cytoplasmic side of the membrane. His166 is a binding site for heme b. A helical membrane pass occupies residues 170 to 190 (GLVVYLMATVTVLLGMYSVWF). The Lumenal segment spans residues 191 to 193 (QAQ). A helical transmembrane segment spans residues 194–214 (IKGAAWYLCLALPVYPALVIM). Residues 215-229 (HQISRSYLPRKKMEM) are Cytoplasmic-facing.

The cofactor is heme b.

It is found in the membrane. The enzyme catalyses monodehydro-L-ascorbate radical(out) + L-ascorbate(in) = monodehydro-L-ascorbate radical(in) + L-ascorbate(out). It carries out the reaction Fe(3+)(out) + L-ascorbate(in) = monodehydro-L-ascorbate radical(in) + Fe(2+)(out) + H(+). Functionally, probable transmembrane reductase that may use ascorbate as an electron donor and transfer electrons across membranes to reduce monodehydro-L-ascorbate radical and iron cations Fe(3+) in another cellular compartment. The protein is Probable transmembrane reductase CYB561D1 of Homo sapiens (Human).